Here is a 98-residue protein sequence, read N- to C-terminus: Large ribosomal subunit protein uL23 (98 aa).

Belongs to the universal ribosomal protein uL23 family. As to quaternary structure, part of the 50S ribosomal subunit. Contacts protein L29, and trigger factor when it is bound to the ribosome.

One of the early assembly proteins it binds 23S rRNA. One of the proteins that surrounds the polypeptide exit tunnel on the outside of the ribosome. Forms the main docking site for trigger factor binding to the ribosome. The sequence is that of Large ribosomal subunit protein uL23 from Rickettsia prowazekii (strain Madrid E).